The following is a 382-amino-acid chain: Lactosylceramide 1,3-N-acetyl-beta-D-glucosaminyltransferase B (382 aa).

Over 1–13 the chain is Cytoplasmic; it reads MAVLKMPRFKKYH. The chain crosses the membrane as a helical; Signal-anchor for type II membrane protein span at residues 14–30; the sequence is LRLMITCFSTLLLMTYW. Topologically, residues 31–382 are lumenal; sequence EKIDNCVVTH…CKAAFFEEDT (352 aa). 4 N-linked (GlcNAc...) asparagine glycosylation sites follow: asparagine 57, asparagine 112, asparagine 167, and asparagine 276.

Belongs to the glycosyltransferase 31 family.

It localises to the golgi apparatus membrane. The catalysed reaction is a beta-D-Gal-(1-&gt;4)-beta-D-Glc-(1&lt;-&gt;1)-Cer(d18:1(4E)) + UDP-N-acetyl-alpha-D-glucosamine = a beta-D-GlcNAc-(1-&gt;3)-beta-D-Gal-(1-&gt;4)-beta-D-Glc-(1&lt;-&gt;1)-Cer(d18:1(4E)) + UDP + H(+). It carries out the reaction a neolactoside nLc4Cer(d18:1(4E)) + UDP-N-acetyl-alpha-D-glucosamine = a neolactoside IV(3)-beta-GlcNAc-nLc4Cer(d18:1(4E)) + UDP + H(+). Its pathway is protein modification; protein glycosylation. Beta-1,3-N-acetylglucosaminyltransferase that plays a key role in the synthesis of lacto- or neolacto-series carbohydrate chains on glycolipids. This chain is Lactosylceramide 1,3-N-acetyl-beta-D-glucosaminyltransferase B (b3gnt5b), found in Danio rerio (Zebrafish).